The following is a 1357-amino-acid chain: DNA-directed RNA polymerase subunit beta (1357 aa).

Belongs to the RNA polymerase beta chain family. In terms of assembly, the RNAP catalytic core consists of 2 alpha, 1 beta, 1 beta' and 1 omega subunit. When a sigma factor is associated with the core the holoenzyme is formed, which can initiate transcription.

It catalyses the reaction RNA(n) + a ribonucleoside 5'-triphosphate = RNA(n+1) + diphosphate. In terms of biological role, DNA-dependent RNA polymerase catalyzes the transcription of DNA into RNA using the four ribonucleoside triphosphates as substrates. This Pseudomonas fluorescens (strain Pf0-1) protein is DNA-directed RNA polymerase subunit beta.